The primary structure comprises 1350 residues: Protein transport protein SEC16A homolog (1350 aa).

5 disordered regions span residues 26–45 (YTPT…GSDS), 73–97 (LGND…SIAP), 964–1063 (MPPP…TRKV), 1118–1216 (AEEA…KPPI), and 1235–1350 (QVME…EVEL). Residues 35 to 45 (KELKFDDGSDS) are compositionally biased toward basic and acidic residues. S43 is modified (phosphoserine). Positions 970-1002 (HSTTGNPQVNEYQHQQQEAAKLSYSQSANTMSS) are enriched in polar residues. Over residues 1150–1168 (SPSSGSWSSGSPTPSENSP) the composition is skewed to low complexity. Polar residues-rich tracts occupy residues 1195–1210 (TYNQ…PPVQ) and 1289–1316 (RSGS…GSVN). Residues 1317-1343 (SSSFMSPTSASTFRPSPLNSSSSSLGE) show a composition bias toward low complexity.

It belongs to the SEC16 family. Interacts with SEC13A, SEC13B and SEC31A.

Its subcellular location is the golgi apparatus. The protein localises to the golgi stack. The protein resides in the endoplasmic reticulum. Functionally, required for efficient protein export from the endoplasmic reticulum (ER) to the Golgi by regulating COPII coat dynamics at the ER. Functions as a scaffold and regulator of COPII coat assembly at ER exit sites. The sequence is that of Protein transport protein SEC16A homolog from Arabidopsis thaliana (Mouse-ear cress).